The primary structure comprises 196 residues: SAGA-associated factor 11 homolog (196 aa).

Positions M1–T22 are disordered. Residues C106–C127 form an SGF11-type zinc finger. The tract at residues T144–F196 is disordered. The residue at position 172 (S172) is a Phosphoserine. Residues N180 to F196 are compositionally biased toward low complexity.

It belongs to the SGF11 family. In terms of assembly, component of some SAGA transcription coactivator-HAT complexes, at least composed of Ada2b, not/nonstop, Pcaf/Gcn5, Sgf11 and Spt3. Within the SAGA complex, Sgf11, e(y)2, and not/nonstop form an additional subcomplex of SAGA called the DUB module (deubiquitination module). Interacts directly with not/nonstop. Interacts with the AMEX complex component xmas-2. Interacts with Cbp80; important for promoter recruitment of Sgf11 that is not associated with the DUB module.

It is found in the nucleus. Its subcellular location is the nucleoplasm. It localises to the cytoplasm. Its function is as follows. Component of the transcription regulatory histone acetylation (HAT) complex SAGA, a multiprotein complex that activates transcription by remodeling chromatin and mediating histone acetylation and deubiquitination. Within the SAGA complex, participates in a subcomplex that specifically deubiquitinates histone H2B. The SAGA complex is recruited to specific gene promoters by activators, where it is required for transcription. Required for nuclear receptor-mediated transactivation. Binds independently on SAGA to promoters in an RNA-dependent manner. Binds to mRNA and is essential for total mRNA export from the nucleus. Required to counteract heterochromatin silencing. Controls the development of neuronal connectivity in visual system by being required for accurate axon targeting in the optic lobe. Required for expression of ecdysone-induced genes such as br/broad. The polypeptide is SAGA-associated factor 11 homolog (Drosophila yakuba (Fruit fly)).